The chain runs to 520 residues: Hydroxymethylglutaryl-CoA synthase, cytoplasmic (520 aa).

Ser4 carries the phosphoserine modification. The (3S)-3-hydroxy-3-methylglutaryl-CoA site is built by Asp43 and Ala44. Residue 44–46 (AGK) coordinates CoA. N6-acetyllysine is present on Lys46. Catalysis depends on Glu95, which acts as the Proton donor/acceptor. 5 residues coordinate (3S)-3-hydroxy-3-methylglutaryl-CoA: Cys129, Asn167, Thr171, Ser221, and His264. The Acyl-thioester intermediate role is filled by Cys129. Residue Asn167 participates in CoA binding. Ser221 is a binding site for CoA. The active-site Proton donor/acceptor is His264. CoA is bound by residues Lys269 and Lys273. The (3S)-3-hydroxy-3-methylglutaryl-CoA site is built by Lys273, Asn343, and Ser377. Lys273 carries the N6-acetyllysine modification. Thr476 carries the phosphothreonine modification. The tract at residues 492-520 (HIPSPAKKVPRLPATAAEPEAAVISNGEH) is disordered. Ser495 and Ser516 each carry phosphoserine.

The protein belongs to the thiolase-like superfamily. HMG-CoA synthase family. As to quaternary structure, homodimer.

Its subcellular location is the cytoplasm. The catalysed reaction is acetoacetyl-CoA + acetyl-CoA + H2O = (3S)-3-hydroxy-3-methylglutaryl-CoA + CoA + H(+). It functions in the pathway metabolic intermediate biosynthesis; (R)-mevalonate biosynthesis; (R)-mevalonate from acetyl-CoA: step 2/3. In terms of biological role, catalyzes the condensation of acetyl-CoA with acetoacetyl-CoA to form HMG-CoA, which is converted by HMG-CoA reductase (HMGCR) into mevalonate, a precursor for cholesterol synthesis. The protein is Hydroxymethylglutaryl-CoA synthase, cytoplasmic of Homo sapiens (Human).